Here is a 303-residue protein sequence, read N- to C-terminus: Acetaldehyde dehydrogenase 2 (303 aa).

Residue C130 is the Acyl-thioester intermediate of the active site. Residues 161–169 (SVGPGTRKN) and N272 contribute to the NAD(+) site.

The protein belongs to the acetaldehyde dehydrogenase family.

It catalyses the reaction acetaldehyde + NAD(+) + CoA = acetyl-CoA + NADH + H(+). The chain is Acetaldehyde dehydrogenase 2 from Burkholderia vietnamiensis (strain G4 / LMG 22486) (Burkholderia cepacia (strain R1808)).